A 201-amino-acid chain; its full sequence is Protein LIGHT-DEPENDENT SHORT HYPOCOTYLS 2 (201 aa).

Over residues M1 to N14 the composition is skewed to polar residues. 2 disordered regions span residues M1 to Q37 and S151 to Q201. A compositionally biased stretch (low complexity) spans T15 to S32. Residues R33–R160 form the ALOG domain. Residues K158–R162 carry the Nuclear localization signal motif.

It belongs to the plant homeotic and developmental regulators ALOG protein family.

The protein resides in the nucleus. Probable transcription regulator that acts as a developmental regulator by promoting cell growth in response to light. This chain is Protein LIGHT-DEPENDENT SHORT HYPOCOTYLS 2 (LSH2), found in Arabidopsis thaliana (Mouse-ear cress).